The primary structure comprises 301 residues: UDP-N-acetylenolpyruvoylglucosamine reductase (301 aa).

The region spanning 30–194 is the FAD-binding PCMH-type domain; the sequence is VGGEADYLVF…LSVKFALAPG (165 aa). The active site involves arginine 173. Serine 223 (proton donor) is an active-site residue. Residue glutamate 293 is part of the active site.

This sequence belongs to the MurB family. The cofactor is FAD.

It localises to the cytoplasm. It catalyses the reaction UDP-N-acetyl-alpha-D-muramate + NADP(+) = UDP-N-acetyl-3-O-(1-carboxyvinyl)-alpha-D-glucosamine + NADPH + H(+). Its pathway is cell wall biogenesis; peptidoglycan biosynthesis. Cell wall formation. This is UDP-N-acetylenolpyruvoylglucosamine reductase from Streptococcus pneumoniae (strain JJA).